The chain runs to 320 residues: Biotin synthase (320 aa).

The Radical SAM core domain maps to 43–270 (GAVQKSQLLS…KSWVRLSAGR (228 aa)). 3 residues coordinate [4Fe-4S] cluster: Cys58, Cys62, and Cys65. Positions 102, 133, 193, and 265 each coordinate [2Fe-2S] cluster.

This sequence belongs to the radical SAM superfamily. Biotin synthase family. Homodimer. The cofactor is [4Fe-4S] cluster. It depends on [2Fe-2S] cluster as a cofactor.

The enzyme catalyses (4R,5S)-dethiobiotin + (sulfur carrier)-SH + 2 reduced [2Fe-2S]-[ferredoxin] + 2 S-adenosyl-L-methionine = (sulfur carrier)-H + biotin + 2 5'-deoxyadenosine + 2 L-methionine + 2 oxidized [2Fe-2S]-[ferredoxin]. Its pathway is cofactor biosynthesis; biotin biosynthesis; biotin from 7,8-diaminononanoate: step 2/2. Functionally, catalyzes the conversion of dethiobiotin (DTB) to biotin by the insertion of a sulfur atom into dethiobiotin via a radical-based mechanism. The polypeptide is Biotin synthase (Hyphomonas neptunium (strain ATCC 15444)).